A 284-amino-acid chain; its full sequence is MQNKVIRLGEIEISNDKPFVLFGGMNVLESRDMAMQVCEAYVKVTEKLGVPYVFKASFDKANRSSIHSYRGPGMEQGLKIFQELKDTFGVKLITDVHEIYQCQPVAEVVDIIQLPAFLARQTDLVAAMAKTGAIINVKKPQFLSPGQMGNIVEKIEECGNDNVILCDRGTNFGYDNLVVDMLGFSVMKKVSKGCPVIFDVTHALQCRDPFGAASGGRRGQVTELARAGMAVGLAGLFLEAHPNPSQAKCDGPSALPLSALEGFVHQMKAIDDLVKHFPELDTAN.

The protein belongs to the KdsA family.

Its subcellular location is the cytoplasm. It carries out the reaction D-arabinose 5-phosphate + phosphoenolpyruvate + H2O = 3-deoxy-alpha-D-manno-2-octulosonate-8-phosphate + phosphate. It functions in the pathway carbohydrate biosynthesis; 3-deoxy-D-manno-octulosonate biosynthesis; 3-deoxy-D-manno-octulosonate from D-ribulose 5-phosphate: step 2/3. It participates in bacterial outer membrane biogenesis; lipopolysaccharide biosynthesis. In Pasteurella multocida (strain Pm70), this protein is 2-dehydro-3-deoxyphosphooctonate aldolase (kdsA).